Reading from the N-terminus, the 280-residue chain is Ribosomal RNA small subunit methyltransferase A (280 aa).

Residues Asn30, Val32, Gly57, Glu78, Asp108, and Asn125 each coordinate S-adenosyl-L-methionine.

This sequence belongs to the class I-like SAM-binding methyltransferase superfamily. rRNA adenine N(6)-methyltransferase family. RsmA subfamily.

It localises to the cytoplasm. It carries out the reaction adenosine(1518)/adenosine(1519) in 16S rRNA + 4 S-adenosyl-L-methionine = N(6)-dimethyladenosine(1518)/N(6)-dimethyladenosine(1519) in 16S rRNA + 4 S-adenosyl-L-homocysteine + 4 H(+). Specifically dimethylates two adjacent adenosines (A1518 and A1519) in the loop of a conserved hairpin near the 3'-end of 16S rRNA in the 30S particle. May play a critical role in biogenesis of 30S subunits. This Leifsonia xyli subsp. xyli (strain CTCB07) protein is Ribosomal RNA small subunit methyltransferase A.